We begin with the raw amino-acid sequence, 691 residues long: Elongation factor G (691 aa).

The 275-residue stretch at 8–282 (ERVRNIGIAA…AVVDYLPAPV (275 aa)) folds into the tr-type G domain. GTP-binding positions include 17 to 24 (AHIDAGKT), 81 to 85 (DTPGH), and 135 to 138 (NKMD).

This sequence belongs to the TRAFAC class translation factor GTPase superfamily. Classic translation factor GTPase family. EF-G/EF-2 subfamily.

Its subcellular location is the cytoplasm. Functionally, catalyzes the GTP-dependent ribosomal translocation step during translation elongation. During this step, the ribosome changes from the pre-translocational (PRE) to the post-translocational (POST) state as the newly formed A-site-bound peptidyl-tRNA and P-site-bound deacylated tRNA move to the P and E sites, respectively. Catalyzes the coordinated movement of the two tRNA molecules, the mRNA and conformational changes in the ribosome. This Prochlorococcus marinus (strain AS9601) protein is Elongation factor G.